The following is a 76-amino-acid chain: MKNRLLLKEFQEKVKLFAQELVNKVSERFPETSVRVITETPRSVLVIVNPGDGDQISHLKLDFDGLVEAQRVYGVL.

This is an uncharacterized protein from Enterobacteria phage T4 (Bacteriophage T4).